The sequence spans 227 residues: Cytochrome c oxidase subunit 2 (227 aa).

At 1-14 (MPYPLQLGLQDATS) the chain is on the mitochondrial intermembrane side. A helical membrane pass occupies residues 15–45 (PIMEELTHFHDHTLMIVFLISSLVLYIISSM). Over 46–59 (LTTKLTHTSTMDAQ) the chain is Mitochondrial matrix. The chain crosses the membrane as a helical span at residues 60–87 (EVETIWTILPAMILILIALPSLRILYMM). The Mitochondrial intermembrane segment spans residues 88-227 (DEINDPSLTV…YFEDWSASLL (140 aa)). Residues H161, C196, E198, C200, H204, and M207 each coordinate Cu cation. E198 contributes to the Mg(2+) binding site.

The protein belongs to the cytochrome c oxidase subunit 2 family. Component of the cytochrome c oxidase (complex IV, CIV), a multisubunit enzyme composed of 14 subunits. The complex is composed of a catalytic core of 3 subunits MT-CO1, MT-CO2 and MT-CO3, encoded in the mitochondrial DNA, and 11 supernumerary subunits COX4I, COX5A, COX5B, COX6A, COX6B, COX6C, COX7A, COX7B, COX7C, COX8 and NDUFA4, which are encoded in the nuclear genome. The complex exists as a monomer or a dimer and forms supercomplexes (SCs) in the inner mitochondrial membrane with NADH-ubiquinone oxidoreductase (complex I, CI) and ubiquinol-cytochrome c oxidoreductase (cytochrome b-c1 complex, complex III, CIII), resulting in different assemblies (supercomplex SCI(1)III(2)IV(1) and megacomplex MCI(2)III(2)IV(2)). Found in a complex with TMEM177, COA6, COX18, COX20, SCO1 and SCO2. Interacts with TMEM177 in a COX20-dependent manner. Interacts with COX20. Interacts with COX16. Cu cation serves as cofactor.

It is found in the mitochondrion inner membrane. It carries out the reaction 4 Fe(II)-[cytochrome c] + O2 + 8 H(+)(in) = 4 Fe(III)-[cytochrome c] + 2 H2O + 4 H(+)(out). In terms of biological role, component of the cytochrome c oxidase, the last enzyme in the mitochondrial electron transport chain which drives oxidative phosphorylation. The respiratory chain contains 3 multisubunit complexes succinate dehydrogenase (complex II, CII), ubiquinol-cytochrome c oxidoreductase (cytochrome b-c1 complex, complex III, CIII) and cytochrome c oxidase (complex IV, CIV), that cooperate to transfer electrons derived from NADH and succinate to molecular oxygen, creating an electrochemical gradient over the inner membrane that drives transmembrane transport and the ATP synthase. Cytochrome c oxidase is the component of the respiratory chain that catalyzes the reduction of oxygen to water. Electrons originating from reduced cytochrome c in the intermembrane space (IMS) are transferred via the dinuclear copper A center (CU(A)) of subunit 2 and heme A of subunit 1 to the active site in subunit 1, a binuclear center (BNC) formed by heme A3 and copper B (CU(B)). The BNC reduces molecular oxygen to 2 water molecules using 4 electrons from cytochrome c in the IMS and 4 protons from the mitochondrial matrix. The sequence is that of Cytochrome c oxidase subunit 2 (MT-CO2) from Dugong dugon (Dugong).